A 207-amino-acid chain; its full sequence is Probable nicotinate-nucleotide adenylyltransferase (207 aa).

Belongs to the NadD family.

It catalyses the reaction nicotinate beta-D-ribonucleotide + ATP + H(+) = deamido-NAD(+) + diphosphate. Its pathway is cofactor biosynthesis; NAD(+) biosynthesis; deamido-NAD(+) from nicotinate D-ribonucleotide: step 1/1. Functionally, catalyzes the reversible adenylation of nicotinate mononucleotide (NaMN) to nicotinic acid adenine dinucleotide (NaAD). The chain is Probable nicotinate-nucleotide adenylyltransferase from Desulfitobacterium hafniense (strain Y51).